A 296-amino-acid chain; its full sequence is Phosphoribosylaminoimidazole-succinocarboxamide synthase (296 aa).

The protein belongs to the SAICAR synthetase family.

The enzyme catalyses 5-amino-1-(5-phospho-D-ribosyl)imidazole-4-carboxylate + L-aspartate + ATP = (2S)-2-[5-amino-1-(5-phospho-beta-D-ribosyl)imidazole-4-carboxamido]succinate + ADP + phosphate + 2 H(+). Its pathway is purine metabolism; IMP biosynthesis via de novo pathway; 5-amino-1-(5-phospho-D-ribosyl)imidazole-4-carboxamide from 5-amino-1-(5-phospho-D-ribosyl)imidazole-4-carboxylate: step 1/2. This chain is Phosphoribosylaminoimidazole-succinocarboxamide synthase, found in Geobacter sulfurreducens (strain ATCC 51573 / DSM 12127 / PCA).